Consider the following 46-residue polypeptide: Toxin PhcrTx2 (46 aa).

Cystine bridges form between C4-C40, C6-C32, and C22-C41.

The protein belongs to the sea anemone type 3 (BDS) potassium channel toxin family.

Its subcellular location is the secreted. The protein localises to the nematocyst. Functionally, neurotoxin that induces paralysis (but not death) to U.thayeri crabs. Partially and reversibly inhibits glutamate-evoked peak currents (IC(50)=4.7 uM) but not voltage-gated potassium channel currents in cultured isolated neurons from the land snail H.aspersa. Weakly inhibits voltage-gated potassium peak currents (IC(50)=6.4 uM) and steady-state currents (IC(50)=8.2 uM) in rat dorsal root ganglion (DRG) neurons. Weakly inhibits voltage-gated sodium currents in rat DRG neurons (IC(50)=0.9 uM). The polypeptide is Toxin PhcrTx2 (Phymanthus crucifer (Red beaded anemone)).